The sequence spans 287 residues: 4,4'-diapophytoene synthase (287 aa).

Residues 18-21 (HSKS), Tyr-41, and Arg-45 contribute to the (2E,6E)-farnesyl diphosphate site. Residues Asp-48 and Asp-52 each coordinate Mg(2+). (2E,6E)-farnesyl diphosphate is bound at residue Gln-165. Asn-168 contacts Mg(2+). Arg-171 is a binding site for (2E,6E)-farnesyl diphosphate. Residue Asp-172 coordinates Mg(2+). Tyr-248 provides a ligand contact to (2E,6E)-farnesyl diphosphate.

Belongs to the phytoene/squalene synthase family. CrtM subfamily. Mg(2+) is required as a cofactor.

The catalysed reaction is 2 (2E,6E)-farnesyl diphosphate = 15-cis-4,4'-diapophytoene + 2 diphosphate. It participates in carotenoid biosynthesis; staphyloxanthin biosynthesis; staphyloxanthin from farnesyl diphosphate: step 1/5. Its function is as follows. Involved in the biosynthesis of the yellow-orange carotenoid staphyloxanthin, which plays a role in the virulence via its protective function against oxidative stress. Catalyzes the head-to-head condensation of two molecules of farnesyl diphosphate (FPP) into the colorless C(30) carotenoid 4,4'-diapophytoene (dehydrosqualene). In Staphylococcus aureus (strain bovine RF122 / ET3-1), this protein is 4,4'-diapophytoene synthase (crtM).